The following is a 67-amino-acid chain: DNA-directed RNA polymerase subunit omega (67 aa).

Belongs to the RNA polymerase subunit omega family. In terms of assembly, the RNAP catalytic core consists of 2 alpha, 1 beta, 1 beta' and 1 omega subunit. When a sigma factor is associated with the core the holoenzyme is formed, which can initiate transcription.

It catalyses the reaction RNA(n) + a ribonucleoside 5'-triphosphate = RNA(n+1) + diphosphate. Its function is as follows. Promotes RNA polymerase assembly. Latches the N- and C-terminal regions of the beta' subunit thereby facilitating its interaction with the beta and alpha subunits. The chain is DNA-directed RNA polymerase subunit omega from Legionella pneumophila (strain Paris).